A 519-amino-acid polypeptide reads, in one-letter code: Galactan beta-1,4-galactosyltransferase GALS2 (519 aa).

Residues 28 to 48 (LALMALLVLCTLATLLPFLPS) traverse the membrane as a helical segment. Residues 257 to 471 (DYLYCGSSLY…YHGSISQRRE (215 aa)) enclose the GT92 domain.

The protein belongs to the glycosyltransferase 92 family. Expressed in the midrib of mature leaves, root vasculature, flower filaments, siliques and seeds.

The protein localises to the golgi apparatus membrane. Involved in the biosynthesis of beta-1,4-galactan. Beta-1,4-galactans are abundant polysaccharides in plant cell walls and are found as side-chain of rhamnogalacturonan I, which is a major component of pectin. The protein is Galactan beta-1,4-galactosyltransferase GALS2 of Arabidopsis thaliana (Mouse-ear cress).